The primary structure comprises 524 residues: BEL1-like homeodomain protein 3 (524 aa).

The tract at residues 171–187 is SR/KY domain; it reads SRYLKPTQQLLDEVVSV. Basic and acidic residues-rich tracts occupy residues 195 to 205 and 216 to 235; these read NKKMKNDKGQD and EDDK…ELQS. Residues 195-236 form a disordered region; the sequence is NKKMKNDKGQDFHNGSSDNITEDDKSQSQELSPSERQELQSK. The segment at 229-300 is BELL domain; sequence ERQELQSKKS…CLRDAIKEQI (72 aa). Positions 346–408 form a DNA-binding region, homeobox; the sequence is AWRPQRGLPE…NARVRLWKPM (63 aa). The disordered stretch occupies residues 429–463; sequence QDTKKMQETSQLKHEDSSSSQQQNQGNNNNNIPYT. The segment covering 430–445 has biased composition (basic and acidic residues); sequence DTKKMQETSQLKHEDS. A compositionally biased stretch (low complexity) spans 446-459; the sequence is SSSQQQNQGNNNNN.

This sequence belongs to the TALE/BELL homeobox family. As to quaternary structure, may form heterodimeric complex with the TALE/KNOX protein STM. Interacts with OFP1, OFP2, OFP3, OFP4, OFP5 and OFP15.

The protein resides in the nucleus. Transcription factor that is responsive of the nuclear import of SHOOT MERISTEMLESS (STM). This Arabidopsis thaliana (Mouse-ear cress) protein is BEL1-like homeodomain protein 3 (BLH3).